The sequence spans 192 residues: Mitochondrial import inner membrane translocase subunit TIM18 (192 aa).

The N-terminal 42 residues, 1 to 42 (MLLFPGLKPVLNASTVIVNPVRAVFPGLVLSTKRSFYSINRL), are a transit peptide targeting the mitochondrion. The Mitochondrial matrix segment spans residues 43 to 88 (NAENKINDIANTSKEASSSVQMFKPPEFSQFKDSYQKDYERIAKYT). The chain crosses the membrane as a helical span at residues 89–109 (LIPLTMVPFYASFTGGVINPL). Residues 110–113 (LDAS) are Mitochondrial intermembrane-facing. Residues 114–134 (LSSIFLIYLQYGFTSCIIDYI) traverse the membrane as a helical segment. The Mitochondrial matrix segment spans residues 135–144 (PKEKYPRWHK). Residues 145 to 165 (LALYCLYGGSMLSLYGIYELE) form a helical membrane-spanning segment. The Mitochondrial intermembrane portion of the chain corresponds to 166–192 (TKNNGFVDLVKKLWNENDDHLYIFGRN).

Belongs to the CybS family. Component of the TIM22 complex, whose core is composed of TIM18, TIM22 and TIM54, associated with the peripheral proteins MRS5/TIM12 and the 70 kDa heterohexamer composed of TIM9 and TIM10 (or TIM8 and TIM13).

The protein resides in the mitochondrion inner membrane. Functionally, component of the TIM22 complex, a complex that mediates the import and insertion of multi-pass transmembrane proteins into the mitochondrial inner membrane. The TIM22 complex forms a twin-pore translocase that uses the membrane potential as external driving force. Its role in the complex is unclear but it may be involved in the assembly and stabilization of the TIM22 complex. This is Mitochondrial import inner membrane translocase subunit TIM18 (TIM18) from Saccharomyces cerevisiae (strain ATCC 204508 / S288c) (Baker's yeast).